Reading from the N-terminus, the 483-residue chain is MORN repeat-containing protein 1 (483 aa).

A Phosphoserine modification is found at Ser18. MORN repeat units lie at residues 39 to 61 (YEGE…DGSY), 62 to 84 (YEGE…WSGN), 86 to 108 (YSGQ…AGGH), 109 to 131 (YEGE…DGQV), 132 to 154 (YQGS…NGDK), 155 to 177 (YEGD…DGST), and 178 to 200 (YKGQ…SGVT). The disordered stretch occupies residues 392-427 (EKAGNRPKGDRSPPEVLSTAQEPLRGTNRSDGTTAE). The segment covering 394–404 (AGNRPKGDRSP) has biased composition (basic and acidic residues). Ser403 is modified (phosphoserine). A compositionally biased stretch (polar residues) spans 418-427 (TNRSDGTTAE).

The polypeptide is MORN repeat-containing protein 1 (Morn1) (Rattus norvegicus (Rat)).